A 119-amino-acid chain; its full sequence is Large ribosomal subunit protein uL14 (119 aa).

Belongs to the universal ribosomal protein uL14 family. In terms of assembly, part of the 50S ribosomal subunit. Forms a cluster with proteins L3 and L19. In the 70S ribosome, L14 and L19 interact and together make contacts with the 16S rRNA in bridges B5 and B8.

Functionally, binds to 23S rRNA. Forms part of two intersubunit bridges in the 70S ribosome. The protein is Large ribosomal subunit protein uL14 of Wolbachia pipientis wMel.